Here is a 151-residue protein sequence, read N- to C-terminus: Small ribosomal subunit protein uS11A (151 aa).

The disordered stretch occupies residues 131–151; sequence DVTPIPSDSTRRKGGRRGRRL. The segment covering 142–151 has biased composition (basic residues); it reads RKGGRRGRRL.

The protein belongs to the universal ribosomal protein uS11 family.

The polypeptide is Small ribosomal subunit protein uS11A (Drosophila melanogaster (Fruit fly)).